A 449-amino-acid polypeptide reads, in one-letter code: Tubulin beta chain (449 aa).

GTP is bound by residues Gln11, Glu71, Ser140, Gly144, Thr145, Gly146, Asn206, and Asn228. Glu71 contacts Mg(2+).

It belongs to the tubulin family. Dimer of alpha and beta chains. A typical microtubule is a hollow water-filled tube with an outer diameter of 25 nm and an inner diameter of 15 nM. Alpha-beta heterodimers associate head-to-tail to form protofilaments running lengthwise along the microtubule wall with the beta-tubulin subunit facing the microtubule plus end conferring a structural polarity. Microtubules usually have 13 protofilaments but different protofilament numbers can be found in some organisms and specialized cells. It depends on Mg(2+) as a cofactor.

The protein resides in the cytoplasm. It is found in the cytoskeleton. Functionally, tubulin is the major constituent of microtubules, a cylinder consisting of laterally associated linear protofilaments composed of alpha- and beta-tubulin heterodimers. Microtubules grow by the addition of GTP-tubulin dimers to the microtubule end, where a stabilizing cap forms. Below the cap, tubulin dimers are in GDP-bound state, owing to GTPase activity of alpha-tubulin. The polypeptide is Tubulin beta chain (TUBB) (Cicer arietinum (Chickpea)).